A 573-amino-acid polypeptide reads, in one-letter code: Protein FAM200A (573 aa).

Positions 1–51 (MTPESRDTTDLSPRGTQEMEGIVVVKVEEEDEEDHFQKQRNKVESSPQVLS) are disordered. At 1–513 (MTPESRDTTD…DEFPLLSRKS (513 aa)) the chain is on the extracellular side. A helical transmembrane segment spans residues 514–533 (ISLLLPFTTTYLCELGFSIL). Topologically, residues 534-573 (TRLKTKKRNRLNSAPDMRVALSSCVPDWKELMNRQAHPSH) are cytoplasmic.

The protein belongs to the FAM200 family.

The protein resides in the membrane. In Macaca fascicularis (Crab-eating macaque), this protein is Protein FAM200A (FAM200A).